The primary structure comprises 251 residues: Imidazole glycerol phosphate synthase subunit HisF (251 aa).

Active-site residues include Asp-11 and Asp-130.

Belongs to the HisA/HisF family. In terms of assembly, heterodimer of HisH and HisF.

The protein localises to the cytoplasm. It catalyses the reaction 5-[(5-phospho-1-deoxy-D-ribulos-1-ylimino)methylamino]-1-(5-phospho-beta-D-ribosyl)imidazole-4-carboxamide + L-glutamine = D-erythro-1-(imidazol-4-yl)glycerol 3-phosphate + 5-amino-1-(5-phospho-beta-D-ribosyl)imidazole-4-carboxamide + L-glutamate + H(+). It functions in the pathway amino-acid biosynthesis; L-histidine biosynthesis; L-histidine from 5-phospho-alpha-D-ribose 1-diphosphate: step 5/9. IGPS catalyzes the conversion of PRFAR and glutamine to IGP, AICAR and glutamate. The HisF subunit catalyzes the cyclization activity that produces IGP and AICAR from PRFAR using the ammonia provided by the HisH subunit. The protein is Imidazole glycerol phosphate synthase subunit HisF of Listeria monocytogenes serotype 4b (strain CLIP80459).